Reading from the N-terminus, the 171-residue chain is S-ribosylhomocysteine lyase (171 aa).

Positions 54, 58, and 128 each coordinate Fe cation.

The protein belongs to the LuxS family. As to quaternary structure, homodimer. The cofactor is Fe cation.

The enzyme catalyses S-(5-deoxy-D-ribos-5-yl)-L-homocysteine = (S)-4,5-dihydroxypentane-2,3-dione + L-homocysteine. Involved in the synthesis of autoinducer 2 (AI-2) which is secreted by bacteria and is used to communicate both the cell density and the metabolic potential of the environment. The regulation of gene expression in response to changes in cell density is called quorum sensing. Catalyzes the transformation of S-ribosylhomocysteine (RHC) to homocysteine (HC) and 4,5-dihydroxy-2,3-pentadione (DPD). The chain is S-ribosylhomocysteine lyase from Salmonella typhi.